The sequence spans 649 residues: MSEEHIYPVTDNLAKNSLLTNEEYLTQYQASISDPSAFWGEKGKILDWIKPYTKVKNSSFDSGHVSIKWFEDGKLNVSANCIDRHLATKGDQVAILWEGDTADKDEKITYKQLHQRVCQFANVLKSQGVRKGDVVCLYMPMTPEAAVAMLACTRIGAVHSIVFGGFSPDAIAGRIVDSSAKIVITADEGRRGGRVVPLKANVDEALTKDGTDCVKSVIVFKNTGGEVNWVVGRDLDWESVCADESSECEPEAMNAEDPLFILYTSGSTGTPKGVLHTTGGYLVYAAMTFKYVFDYQEGDIYWCTADVGWITGHTYSVYGPLANGATSLIFEGVPNYPTPARMSEVVDKHKVSILYTAPTAIRALMAKGDQAIEGTHRSSLRILGSVGEPINPEAWEWYYNKIGDERCPIVDTWWQTETGGILISPLPGATDLKPGSATRPFFGVQPAIVDSEGVVLEGEAAGNLVMLDSWPGQMRTLYNNHDRFEQTYFSTFKGMYFTGDGARRDSDGYYWITGRVDDVLNVSGHRMGTAEIESALVSHPKIAEAAVVGVPHEIKGQGIYAYVTLNEGEYPSPELYAEVKQWVRKEIGAIATPDILHWAEGLPKTRSGKIMRRILRKIATGESDSLGDISTLADPSVVEQLIKENRETS.

CoA contacts are provided by residues 191–194, T311, and N335; that span reads RGGR. Residues 387-389, 411-416, D500, and R515 contribute to the ATP site; these read GEP and DTWWQT. S523 provides a ligand contact to CoA. R526 provides a ligand contact to ATP. Mg(2+) contacts are provided by V537, H539, and I542. A CoA-binding site is contributed by R584. At K609 the chain carries N6-acetyllysine.

The protein belongs to the ATP-dependent AMP-binding enzyme family. Mg(2+) is required as a cofactor. Post-translationally, acetylated. Deacetylation by the SIR2-homolog deacetylase activates the enzyme.

The catalysed reaction is acetate + ATP + CoA = acetyl-CoA + AMP + diphosphate. Catalyzes the conversion of acetate into acetyl-CoA (AcCoA), an essential intermediate at the junction of anabolic and catabolic pathways. AcsA undergoes a two-step reaction. In the first half reaction, AcsA combines acetate with ATP to form acetyl-adenylate (AcAMP) intermediate. In the second half reaction, it can then transfer the acetyl group from AcAMP to the sulfhydryl group of CoA, forming the product AcCoA. The protein is Acetyl-coenzyme A synthetase of Psychromonas ingrahamii (strain DSM 17664 / CCUG 51855 / 37).